Consider the following 257-residue polypeptide: Small ribosomal subunit protein uS15m (257 aa).

The N-terminal 57 residues, 1 to 57, are a transit peptide targeting the mitochondrion; it reads MLRAAWRALSSVRVQAVTQAPVPALRARSSASLPSARCGLQTPSLLNAARAYAVQKP. Residues 228 to 257 form a disordered region; it reads KAAAAAAKKEKRERVPENPSNALPEKTKEN. Positions 234 to 243 are enriched in basic and acidic residues; sequence AKKEKRERVP.

Belongs to the universal ribosomal protein uS15 family. In terms of assembly, component of the mitochondrial ribosome small subunit (28S) which comprises a 12S rRNA and about 30 distinct proteins. Interacts with METTL17.

The protein resides in the mitochondrion matrix. The chain is Small ribosomal subunit protein uS15m (Mrps15) from Rattus norvegicus (Rat).